The following is a 517-amino-acid chain: Glutamate--cysteine ligase (517 aa).

The protein belongs to the glutamate--cysteine ligase type 1 family. Type 1 subfamily.

The catalysed reaction is L-cysteine + L-glutamate + ATP = gamma-L-glutamyl-L-cysteine + ADP + phosphate + H(+). Its pathway is sulfur metabolism; glutathione biosynthesis; glutathione from L-cysteine and L-glutamate: step 1/2. The sequence is that of Glutamate--cysteine ligase from Pectobacterium atrosepticum (strain SCRI 1043 / ATCC BAA-672) (Erwinia carotovora subsp. atroseptica).